The following is a 382-amino-acid chain: Anhydro-N-acetylmuramic acid kinase (382 aa).

9 to 16 (GTSLDGID) is an ATP binding site.

It belongs to the anhydro-N-acetylmuramic acid kinase family.

It catalyses the reaction 1,6-anhydro-N-acetyl-beta-muramate + ATP + H2O = N-acetyl-D-muramate 6-phosphate + ADP + H(+). Its pathway is amino-sugar metabolism; 1,6-anhydro-N-acetylmuramate degradation. The protein operates within cell wall biogenesis; peptidoglycan recycling. Catalyzes the specific phosphorylation of 1,6-anhydro-N-acetylmuramic acid (anhMurNAc) with the simultaneous cleavage of the 1,6-anhydro ring, generating MurNAc-6-P. Is required for the utilization of anhMurNAc either imported from the medium or derived from its own cell wall murein, and thus plays a role in cell wall recycling. The polypeptide is Anhydro-N-acetylmuramic acid kinase (Bacillus cereus (strain AH820)).